A 229-amino-acid chain; its full sequence is tRNA pseudouridine synthase B (229 aa).

The active-site Nucleophile is the Asp42.

The protein belongs to the pseudouridine synthase TruB family. Type 1 subfamily.

It carries out the reaction uridine(55) in tRNA = pseudouridine(55) in tRNA. Functionally, responsible for synthesis of pseudouridine from uracil-55 in the psi GC loop of transfer RNAs. The protein is tRNA pseudouridine synthase B of Ureaplasma urealyticum serovar 10 (strain ATCC 33699 / Western).